The chain runs to 268 residues: 14-3-3-like protein GF14 upsilon (268 aa).

A phosphoserine mark is found at Ser69 and Ser192. Thr213 is subject to Phosphothreonine. A disordered region spans residues 243–268 (EAGDDIKEAPKEVQKVDEQAQPPPSQ). Positions 246–260 (DDIKEAPKEVQKVDE) are enriched in basic and acidic residues. A Phosphoserine modification is found at Ser267.

It belongs to the 14-3-3 family. In terms of assembly, interacts with EDE1. Interacts with DREB1A and DREB1B in the nucleus. Interacts with CINV1.

The protein resides in the cytoplasm. The protein localises to the nucleus. Functionally, is associated with a DNA binding complex that binds to the G box, a well-characterized cis-acting DNA regulatory element found in plant genes. May be involved in cell cycle regulation by binding to soluble EDE1 and sequestering it in an inactive form during the early stages of mitosis. This chain is 14-3-3-like protein GF14 upsilon (GRF5), found in Arabidopsis thaliana (Mouse-ear cress).